The sequence spans 876 residues: Valine--tRNA ligase (876 aa).

The short motif at 44–54 is the 'HIGH' region element; that stretch reads PNVTGKLHLGH. The 'KMSKS' region motif lies at 520–524; the sequence is KMSKS. Residue lysine 523 participates in ATP binding. Positions 805–876 form a coiled coil; the sequence is LEGLIDMDKE…VKARIEQLKA (72 aa).

Belongs to the class-I aminoacyl-tRNA synthetase family. ValS type 1 subfamily. Monomer.

The protein localises to the cytoplasm. The enzyme catalyses tRNA(Val) + L-valine + ATP = L-valyl-tRNA(Val) + AMP + diphosphate. Functionally, catalyzes the attachment of valine to tRNA(Val). As ValRS can inadvertently accommodate and process structurally similar amino acids such as threonine, to avoid such errors, it has a 'posttransfer' editing activity that hydrolyzes mischarged Thr-tRNA(Val) in a tRNA-dependent manner. The chain is Valine--tRNA ligase from Staphylococcus carnosus (strain TM300).